Consider the following 294-residue polypeptide: Protein huluwa (294 aa).

At 1–23 (MSQLGSAVPSSNLPEGLPVSSLA) the chain is on the extracellular side. The chain crosses the membrane as a helical span at residues 24-44 (LLILVLIPCVLLLLLLNCLFV). The Cytoplasmic portion of the chain corresponds to 45 to 294 (GYKLFRMTRR…PPITTKQYWV (250 aa)). Residues 154–175 (SDSDMERVNTVPPNSPVLRVTP) form a disordered region. The VPPNSP motif signature appears at 164–169 (VPPNSP). Residues 184–190 (SLRRSST) carry the SLRRSST motif motif.

It belongs to the huluwa family. Interacts with axin1; leading to promote the tankyrase-mediated degradation of axin. Interacts with axin2; leading to promote the tankyrase-mediated degradation of axin.

The protein localises to the cell membrane. Functionally, key maternal determinant of the dorsal organizer and body axis formation in vertebrates that acts by promoting stabilization of beta-catenin (ctnnb1). Localizes on the plasma membrane of the future dorsal blastomeres in early blastulas and binds to and promotes the tankyrase-mediated degradation of axin (axin1 and axin2). Axin degradation results in stabilization and nuclear translocation of beta-catenin (ctnnb1) for activating organizer-specific target gene expression. The chain is Protein huluwa from Danio rerio (Zebrafish).